A 547-amino-acid chain; its full sequence is ATP synthase subunit alpha (547 aa).

173-180 (GDRQTGKT) provides a ligand contact to ATP.

It belongs to the ATPase alpha/beta chains family. In terms of assembly, F-type ATPases have 2 components, CF(1) - the catalytic core - and CF(0) - the membrane proton channel. CF(1) has five subunits: alpha(3), beta(3), gamma(1), delta(1), epsilon(1). CF(0) has three main subunits: a(1), b(2) and c(9-12). The alpha and beta chains form an alternating ring which encloses part of the gamma chain. CF(1) is attached to CF(0) by a central stalk formed by the gamma and epsilon chains, while a peripheral stalk is formed by the delta and b chains.

Its subcellular location is the cell membrane. The enzyme catalyses ATP + H2O + 4 H(+)(in) = ADP + phosphate + 5 H(+)(out). In terms of biological role, produces ATP from ADP in the presence of a proton gradient across the membrane. The alpha chain is a regulatory subunit. The sequence is that of ATP synthase subunit alpha from Thermobifida fusca (strain YX).